The sequence spans 428 residues: MTIVEDAQKGIITEEMKIVAKDEGLDPEFIRRGVAAGRIVIPTSPYRQVKICGIGEGLRTKVNASIGVSSDIVDADMEVKKAQAAEAAGADTLMELGTGGDFLAIRKKVIDSISLSVGSVPLYQAFIEAARKYGSIVDMTEDELFKATEDQAKLGTNFMAIHTGINNITMDRLKAHGRYGGLCSRGGAFMTSWMLHNEKENPLYANFDYLVEILKEHEVVLSTGNGMRAGAVHDATDRAQIQELIINSELADRAHKQGVQVIVEGPGHVPLDQIGTNVKLMKEMSGHKPFYMLGPLVTDIAPGYDHIVTAIGASVSASYGCDFLCYVTPAEHLALPNLEDVITGVKTSKIAAHVGDMVKYPDRAREQDLAMGRARRDLDWQKMYSLAIDPEHAKEVRNSRAPEDSDACTMCGNFCALKIVNQNYNLAK.

Substrate contacts are provided by residues Met-94, Tyr-123, His-162, Ser-184–Gly-186, Asn-225–Arg-228, and Glu-264. His-268 contributes to the Zn(2+) binding site. Position 291 (Tyr-291) interacts with substrate. His-332 lines the Zn(2+) pocket. Positions 408, 411, and 415 each coordinate [4Fe-4S] cluster.

This sequence belongs to the ThiC family. It depends on [4Fe-4S] cluster as a cofactor.

The enzyme catalyses 5-amino-1-(5-phospho-beta-D-ribosyl)imidazole + S-adenosyl-L-methionine = 4-amino-2-methyl-5-(phosphooxymethyl)pyrimidine + CO + 5'-deoxyadenosine + formate + L-methionine + 3 H(+). It participates in cofactor biosynthesis; thiamine diphosphate biosynthesis. Catalyzes the synthesis of the hydroxymethylpyrimidine phosphate (HMP-P) moiety of thiamine from aminoimidazole ribotide (AIR) in a radical S-adenosyl-L-methionine (SAM)-dependent reaction. This is Phosphomethylpyrimidine synthase 1 from Methanosarcina barkeri (strain Fusaro / DSM 804).